Reading from the N-terminus, the 647-residue chain is Leishmanolysin-like peptidase (647 aa).

Position 264 (H264) interacts with Zn(2+). E265 is a catalytic residue. H268 and H370 together coordinate Zn(2+).

This sequence belongs to the peptidase M8 family. It depends on Zn(2+) as a cofactor. As to expression, expressed in all cell lines analyzed.

The protein localises to the cytoplasm. It is found in the lipid droplet. Its function is as follows. Metalloprotease. The polypeptide is Leishmanolysin-like peptidase (LMLN) (Homo sapiens (Human)).